Consider the following 650-residue polypeptide: 1-deoxy-D-xylulose-5-phosphate synthase (650 aa).

Thiamine diphosphate contacts are provided by residues His-73 and 114-116; that span reads SHA. Asp-145 contacts Mg(2+). Thiamine diphosphate contacts are provided by residues 146–147, Asn-174, Tyr-285, and Glu-367; that span reads GA. A Mg(2+)-binding site is contributed by Asn-174. The segment at 631–650 is disordered; sequence MGDEVGADESNQTPAGGGQA.

This sequence belongs to the transketolase family. DXPS subfamily. Homodimer. Mg(2+) serves as cofactor. The cofactor is thiamine diphosphate.

The catalysed reaction is D-glyceraldehyde 3-phosphate + pyruvate + H(+) = 1-deoxy-D-xylulose 5-phosphate + CO2. Its pathway is metabolic intermediate biosynthesis; 1-deoxy-D-xylulose 5-phosphate biosynthesis; 1-deoxy-D-xylulose 5-phosphate from D-glyceraldehyde 3-phosphate and pyruvate: step 1/1. Its function is as follows. Catalyzes the acyloin condensation reaction between C atoms 2 and 3 of pyruvate and glyceraldehyde 3-phosphate to yield 1-deoxy-D-xylulose-5-phosphate (DXP). The polypeptide is 1-deoxy-D-xylulose-5-phosphate synthase (Parafrankia sp. (strain EAN1pec)).